A 332-amino-acid chain; its full sequence is Putative symporter YfeH (332 aa).

It belongs to the bile acid:sodium symporter (BASS) (TC 2.A.28) family.

This is Putative symporter YfeH (yfeH) from Escherichia coli (strain K12).